Consider the following 342-residue polypeptide: NADPH-dependent methylglyoxal reductase GRE2 (342 aa).

NADP(+)-binding positions include 7 to 12, arginine 32, lysine 36, 57 to 58, tyrosine 165, lysine 169, valine 199, and serine 216; these read GANGFI and DI. Residue lysine 169 is the Proton donor of the active site. A Phosphoserine modification is found at serine 333.

It belongs to the NAD(P)-dependent epimerase/dehydratase family. Dihydroflavonol-4-reductase subfamily. As to quaternary structure, monomer. In terms of processing, the N-terminus is blocked.

Its subcellular location is the cytoplasm. The protein resides in the nucleus. The catalysed reaction is (S)-lactaldehyde + NADP(+) = methylglyoxal + NADPH + H(+). The enzyme catalyses 3-methylbutanol + NADP(+) = 3-methylbutanal + NADPH + H(+). It carries out the reaction 2,5-hexanedione + 2 NADPH + 2 H(+) = (2S,5S)-hexanediol + 2 NADP(+). It catalyses the reaction (S)-3-chloro-1-phenyl-1-propanol + NADP(+) = 3-chloro-1-phenyl-1-propanone + NADPH + H(+). Activated by glutathione. Catalyzes the irreversible reduction of the cytotoxic compound methylglyoxal (MG, 2-oxopropanal) to (S)-lactaldehyde as an alternative to detoxification of MG by glyoxalase I GLO1. MG is synthesized via a bypath of glycolysis from dihydroxyacetone phosphate and is believed to play a role in cell cycle regulation and stress adaptation. Also catalyzes the reduction of 3-methylbutanal to 3-methylbutanol. Acts as a suppressor of 3-methylbutanol-induced filamentation by modulating the levels of 3-methylbutanal, the signal to which cells respond by filamentation. Also involved in ergosterol metabolism. This is NADPH-dependent methylglyoxal reductase GRE2 (GRE2) from Saccharomyces cerevisiae (strain ATCC 204508 / S288c) (Baker's yeast).